The chain runs to 70 residues: Large ribosomal subunit protein bL31 (70 aa).

Zn(2+) contacts are provided by Cys-16, Cys-18, Cys-37, and Cys-40.

Belongs to the bacterial ribosomal protein bL31 family. Type A subfamily. In terms of assembly, part of the 50S ribosomal subunit. Requires Zn(2+) as cofactor.

Its function is as follows. Binds the 23S rRNA. In Haemophilus influenzae (strain 86-028NP), this protein is Large ribosomal subunit protein bL31.